Consider the following 120-residue polypeptide: Cytochrome c oxidase subunit 5 (120 aa).

Serine 2 is subject to Blocked amino end (Ser). Zn(2+) is bound by residues cysteine 76, histidine 84, cysteine 99, and cysteine 102.

Belongs to the cytochrome c oxidase subunit 5B family. In terms of assembly, component of the cytochrome c oxidase (complex IV, CIV), a multisubunit enzyme composed of a catalytic core of 3 subunits and several supernumerary subunits. The complex exists as a monomer or a dimer and forms supercomplexes (SCs) in the inner mitochondrial membrane with ubiquinol-cytochrome c oxidoreductase (cytochrome b-c1 complex, complex III, CIII). Slime mold cytochrome c oxidase consists of at least seven different polypeptides species, subunits I, II, III, IV, V, VI, and VIIe/s in order of MW.

Its subcellular location is the mitochondrion inner membrane. The protein operates within energy metabolism; oxidative phosphorylation. In terms of biological role, component of the cytochrome c oxidase, the last enzyme in the mitochondrial electron transport chain which drives oxidative phosphorylation. The respiratory chain contains 3 multisubunit complexes succinate dehydrogenase (complex II, CII), ubiquinol-cytochrome c oxidoreductase (cytochrome b-c1 complex, complex III, CIII) and cytochrome c oxidase (complex IV, CIV), that cooperate to transfer electrons derived from NADH and succinate to molecular oxygen, creating an electrochemical gradient over the inner membrane that drives transmembrane transport and the ATP synthase. Cytochrome c oxidase is the component of the respiratory chain that catalyzes the reduction of oxygen to water. Electrons originating from reduced cytochrome c in the intermembrane space (IMS) are transferred via the dinuclear copper A center (CU(A)) of subunit 2 and heme A of subunit 1 to the active site in subunit 1, a binuclear center (BNC) formed by heme A3 and copper B (CU(B)). The BNC reduces molecular oxygen to 2 water molecules using 4 electrons from cytochrome c in the IMS and 4 protons from the mitochondrial matrix. The protein is Cytochrome c oxidase subunit 5 (cxeA) of Dictyostelium discoideum (Social amoeba).